The sequence spans 252 residues: Isoprenyl transferase (252 aa).

The active site involves aspartate 32. Aspartate 32 contributes to the Mg(2+) binding site. Residues 33-36 (GNGR), tryptophan 37, arginine 45, histidine 49, and 77-79 (STE) each bind substrate. Asparagine 80 serves as the catalytic Proton acceptor. Substrate-binding positions include tryptophan 81, arginine 83, arginine 200, and 206 to 208 (RLS). Glutamate 219 is a Mg(2+) binding site.

Belongs to the UPP synthase family. As to quaternary structure, homodimer. Requires Mg(2+) as cofactor.

Its function is as follows. Catalyzes the condensation of isopentenyl diphosphate (IPP) with allylic pyrophosphates generating different type of terpenoids. This is Isoprenyl transferase from Listeria monocytogenes serotype 4b (strain F2365).